The following is a 689-amino-acid chain: Methionine--tRNA ligase (689 aa).

The short motif at 15-25 is the 'HIGH' region element; the sequence is PYANGPVHIGH. The Zn(2+) site is built by Cys-147, Cys-150, Cys-160, and Cys-163. The short motif at 342 to 346 is the 'KMSKS' region element; sequence KISTS. Residue Thr-345 coordinates ATP. Positions 588–689 constitute a tRNA-binding domain; that stretch reads DFAKMDIRVA…AVVNAGSMIG (102 aa).

It belongs to the class-I aminoacyl-tRNA synthetase family. MetG type 1 subfamily. In terms of assembly, homodimer. It depends on Zn(2+) as a cofactor.

The protein localises to the cytoplasm. The catalysed reaction is tRNA(Met) + L-methionine + ATP = L-methionyl-tRNA(Met) + AMP + diphosphate. In terms of biological role, is required not only for elongation of protein synthesis but also for the initiation of all mRNA translation through initiator tRNA(fMet) aminoacylation. The sequence is that of Methionine--tRNA ligase from Cytophaga hutchinsonii (strain ATCC 33406 / DSM 1761 / CIP 103989 / NBRC 15051 / NCIMB 9469 / D465).